The sequence spans 787 residues: Protein PAT1 homolog 2 (787 aa).

Disordered stretches follow at residues 94-120 (KHLG…WTQD), 134-221 (EQVQ…NASP), 338-374 (VREH…GLQF), 411-445 (LAKK…QQPQ), and 765-787 (VSES…FVRG). A compositionally biased stretch (polar residues) spans 105–120 (GSFSRESSTATDWTQD). Residues 142–153 (SSQPQSSPNSNS) show a composition bias toward low complexity. 3 stretches are compositionally biased toward polar residues: residues 154–171 (LYRT…QHYS), 180–198 (STFT…SSPS), and 208–221 (GGSQ…NASP). 2 positions are modified to phosphoserine: S184 and S192. Residues 341–353 (HKHKSSHRSRKNR) are compositionally biased toward basic residues. 2 stretches are compositionally biased toward polar residues: residues 355 to 373 (GISQ…SGLQ) and 436 to 445 (SRNSSDQQPQ).

In terms of biological role, activator of mRNA decapping. Involved in mRNA decay via decapping. This is Protein PAT1 homolog 2 from Arabidopsis thaliana (Mouse-ear cress).